A 514-amino-acid polypeptide reads, in one-letter code: Histidine ammonia-lyase (514 aa).

Positions Ala-143–Gly-145 form a cross-link, 5-imidazolinone (Ala-Gly). Ser-144 is modified (2,3-didehydroalanine (Ser)).

Belongs to the PAL/histidase family. Contains an active site 4-methylidene-imidazol-5-one (MIO), which is formed autocatalytically by cyclization and dehydration of residues Ala-Ser-Gly.

The protein localises to the cytoplasm. It carries out the reaction L-histidine = trans-urocanate + NH4(+). It participates in amino-acid degradation; L-histidine degradation into L-glutamate; N-formimidoyl-L-glutamate from L-histidine: step 1/3. The protein is Histidine ammonia-lyase of Photorhabdus laumondii subsp. laumondii (strain DSM 15139 / CIP 105565 / TT01) (Photorhabdus luminescens subsp. laumondii).